The sequence spans 303 residues: Quinolinate synthase (303 aa).

Residues histidine 23 and serine 40 each contribute to the iminosuccinate site. Position 85 (cysteine 85) interacts with [4Fe-4S] cluster. Iminosuccinate-binding positions include 111-113 (YIN) and serine 128. Residue cysteine 171 participates in [4Fe-4S] cluster binding. Iminosuccinate is bound by residues 197 to 199 (HPE) and threonine 214. Residue cysteine 259 coordinates [4Fe-4S] cluster.

This sequence belongs to the quinolinate synthase family. Type 2 subfamily. [4Fe-4S] cluster is required as a cofactor.

The protein localises to the cytoplasm. It carries out the reaction iminosuccinate + dihydroxyacetone phosphate = quinolinate + phosphate + 2 H2O + H(+). Its pathway is cofactor biosynthesis; NAD(+) biosynthesis; quinolinate from iminoaspartate: step 1/1. Its function is as follows. Catalyzes the condensation of iminoaspartate with dihydroxyacetone phosphate to form quinolinate. The sequence is that of Quinolinate synthase from Clostridium acetobutylicum (strain ATCC 824 / DSM 792 / JCM 1419 / IAM 19013 / LMG 5710 / NBRC 13948 / NRRL B-527 / VKM B-1787 / 2291 / W).